Reading from the N-terminus, the 174-residue chain is Regulator of G-protein signaling 8 (174 aa).

The 117-residue stretch at 46-162 (SFDILLSNKY…IRSKIYQDLL (117 aa)) folds into the RGS domain.

It localises to the cell membrane. It is found in the membrane. The protein resides in the perikaryon. The protein localises to the cell projection. Its subcellular location is the dendrite. It localises to the nucleus. Regulates G protein-coupled receptor signaling cascades, including signaling via muscarinic acetylcholine receptors and dopamine receptors. Inhibits signal transduction by increasing the GTPase activity of G protein alpha subunits, thereby driving them into their inactive GDP-bound form. Modulates the activity of potassium channels that are activated in response to G protein-coupled receptor signaling. The chain is Regulator of G-protein signaling 8 (rgs8) from Danio rerio (Zebrafish).